A 449-amino-acid polypeptide reads, in one-letter code: Exodeoxyribonuclease 7 large subunit (449 aa).

It belongs to the XseA family. In terms of assembly, heterooligomer composed of large and small subunits.

The protein resides in the cytoplasm. It catalyses the reaction Exonucleolytic cleavage in either 5'- to 3'- or 3'- to 5'-direction to yield nucleoside 5'-phosphates.. In terms of biological role, bidirectionally degrades single-stranded DNA into large acid-insoluble oligonucleotides, which are then degraded further into small acid-soluble oligonucleotides. The chain is Exodeoxyribonuclease 7 large subunit from Salmonella newport (strain SL254).